The chain runs to 353 residues: Methionine import ATP-binding protein MetN (353 aa).

The ABC transporter domain maps to 8 to 249; it reads LDQIDVTFHQ…PKQPLTQDFI (242 aa). Position 42 to 49 (42 to 49) interacts with ATP; that stretch reads GYSGAGKS.

It belongs to the ABC transporter superfamily. Methionine importer (TC 3.A.1.24) family. The complex is composed of two ATP-binding proteins (MetN), two transmembrane proteins (MetI) and a solute-binding protein (MetQ).

The protein localises to the cell membrane. The catalysed reaction is L-methionine(out) + ATP + H2O = L-methionine(in) + ADP + phosphate + H(+). The enzyme catalyses D-methionine(out) + ATP + H2O = D-methionine(in) + ADP + phosphate + H(+). In terms of biological role, part of the ABC transporter complex MetNIQ involved in methionine import. Responsible for energy coupling to the transport system. This chain is Methionine import ATP-binding protein MetN, found in Streptococcus pneumoniae serotype 4 (strain ATCC BAA-334 / TIGR4).